We begin with the raw amino-acid sequence, 194 residues long: Putative NAD(P)H nitroreductase YfhC (194 aa).

FMN-binding positions include arginine 20–serine 22, lysine 147–isoleucine 148, and arginine 188.

The protein belongs to the nitroreductase family. FMN is required as a cofactor.

The sequence is that of Putative NAD(P)H nitroreductase YfhC (yfhC) from Bacillus subtilis (strain 168).